We begin with the raw amino-acid sequence, 113 residues long: Ranasmurfin (113 aa).

A 2',4',5'-topaquinone modification is found at Tyr-2. The segment at residues 2 to 31 (YACSFPPSEIPGSKECLAEALQKHQGFKKK) is a cross-link (lysine tyrosylquinone (Tyr-Lys)). Disulfide bonds link Cys-4–Cys-62, Cys-17–Cys-65, and Cys-37–Cys-101. Position 9 is an aminomalonic acid (Ser); in chain B (Ser-9). Positions 17–65 (CLAEALQKHQGFKKKSYALICAYLNYKEDAENYERAAEDFDSAVKCTGC) form a cross-link, S-cysteinyl 3-(oxidosulfanyl)alanine (Cys-Cys); in chain B. The segment at residues 30-108 (KKSYALICAY…SLCTLFQKLY (79 aa)) is a cross-link (lysine tyrosylquinone (Lys-Tyr)). Cys-65 is subject to Cysteine sulfenic acid (-SOH); in chain B. Tyr-108 bears the 2',4',5'-topaquinone mark. Zn(2+)-binding residues include Tyr-108 and His-112. Residue Tyr-108 forms a 5'-tyrosyl-5'-aminotyrosine (Tyr-Tyr) (interchain with Y-108) linkage.

As to quaternary structure, homodimer. The two chains, designated A and B, differ in their modifications, but not, it is thought, in their sequence. It depends on Zn(2+) as a cofactor. As to expression, foam nest.

Its subcellular location is the secreted. This Polypedates leucomystax (Common tree frog) protein is Ranasmurfin.